The following is a 325-amino-acid chain: Olfactory receptor 1S1 (325 aa).

The Extracellular segment spans residues 1-38; it reads MKTFSSFLQIGRNMHQGNQTTITEFILLGFFKQDEHQN. A glycan (N-linked (GlcNAc...) asparagine) is linked at Asn-18. Residues 39–62 form a helical membrane-spanning segment; the sequence is LLFVLFLGMYLVTVIGNGLIIVAI. At 63–70 the chain is on the cytoplasmic side; it reads SLDTYLHT. A helical transmembrane segment spans residues 71 to 92; the sequence is PMYLFLANLSFADISSISNSVP. The Extracellular portion of the chain corresponds to 93-113; that stretch reads KMLVNIQTKSQSISYESCITQ. Cys-110 and Cys-202 are oxidised to a cystine. A helical transmembrane segment spans residues 114–133; sequence MYFSIVFVVIDNLLLGTMAY. Residues 134-152 lie on the Cytoplasmic side of the membrane; the sequence is DHFVAICHPLNYTILMRPR. Residues 153-171 form a helical membrane-spanning segment; sequence FGILLTVISWFLSNIIALT. Residues 172–208 are Extracellular-facing; sequence HTLLLIQLLFCNHNTLPHFFCDLAPLLKLSCSDTLIN. The helical transmembrane segment at 209 to 232 threads the bilayer; it reads ELVLFIVGLSVIIFPFTLSFFSYV. The Cytoplasmic portion of the chain corresponds to 233–249; it reads CIIRAVLRVSSTQGKWK. Residues 250–272 form a helical membrane-spanning segment; that stretch reads AFSTCGSHLTVVLLFYGTIVGVY. At 273–285 the chain is on the extracellular side; it reads FFPSSTHPEDTDK. Residues 286–305 form a helical membrane-spanning segment; the sequence is IGAVLFTVVTPMINPFIYSL. The Cytoplasmic segment spans residues 306 to 325; sequence RNKDMKGALRKLINRKISSL.

This sequence belongs to the G-protein coupled receptor 1 family.

Its subcellular location is the cell membrane. Its function is as follows. Odorant receptor. The chain is Olfactory receptor 1S1 (OR1S1) from Homo sapiens (Human).